Reading from the N-terminus, the 489-residue chain is Dihydropyrimidinase 1 (489 aa).

3 residues coordinate Zn(2+): His-61, His-63, and Lys-156. Lys-156 is subject to N6-carboxylysine. Substrate is bound at residue Tyr-161. Positions 189 and 245 each coordinate Zn(2+). Residue Ser-295 participates in substrate binding. Asp-323 serves as a coordination point for Zn(2+). Position 344 (Asn-344) interacts with substrate.

This sequence belongs to the metallo-dependent hydrolases superfamily. Hydantoinase/dihydropyrimidinase family. As to quaternary structure, homotetramer. Zn(2+) is required as a cofactor. Carboxylation allows a single lysine to coordinate two zinc ions.

The protein localises to the nucleus. The enzyme catalyses 5,6-dihydrouracil + H2O = 3-(carbamoylamino)propanoate + H(+). This Caenorhabditis briggsae protein is Dihydropyrimidinase 1 (dhp-1).